The sequence spans 271 residues: Formamidopyrimidine-DNA glycosylase (271 aa).

Proline 2 functions as the Schiff-base intermediate with DNA in the catalytic mechanism. The Proton donor role is filled by glutamate 3. Lysine 58 acts as the Proton donor; for beta-elimination activity in catalysis. DNA is bound by residues histidine 92, arginine 111, and arginine 152. An FPG-type zinc finger spans residues 237–271 (MVYGREGQACKHCGRELKHATIGQRATVWCAACQR). Catalysis depends on arginine 261, which acts as the Proton donor; for delta-elimination activity.

It belongs to the FPG family. Monomer. Requires Zn(2+) as cofactor.

The enzyme catalyses Hydrolysis of DNA containing ring-opened 7-methylguanine residues, releasing 2,6-diamino-4-hydroxy-5-(N-methyl)formamidopyrimidine.. The catalysed reaction is 2'-deoxyribonucleotide-(2'-deoxyribose 5'-phosphate)-2'-deoxyribonucleotide-DNA = a 3'-end 2'-deoxyribonucleotide-(2,3-dehydro-2,3-deoxyribose 5'-phosphate)-DNA + a 5'-end 5'-phospho-2'-deoxyribonucleoside-DNA + H(+). In terms of biological role, involved in base excision repair of DNA damaged by oxidation or by mutagenic agents. Acts as a DNA glycosylase that recognizes and removes damaged bases. Has a preference for oxidized purines, such as 7,8-dihydro-8-oxoguanine (8-oxoG). Has AP (apurinic/apyrimidinic) lyase activity and introduces nicks in the DNA strand. Cleaves the DNA backbone by beta-delta elimination to generate a single-strand break at the site of the removed base with both 3'- and 5'-phosphates. The protein is Formamidopyrimidine-DNA glycosylase of Xanthomonas campestris pv. campestris (strain B100).